Consider the following 266-residue polypeptide: Glutamate racemase (266 aa).

Residues 7–8 (DS) and 39–40 (YG) contribute to the substrate site. Residue Cys-70 is the Proton donor/acceptor of the active site. Position 71 to 72 (71 to 72 (NT)) interacts with substrate. Residue Cys-186 is the Proton donor/acceptor of the active site. 187 to 188 (TH) contributes to the substrate binding site.

This sequence belongs to the aspartate/glutamate racemases family.

It catalyses the reaction L-glutamate = D-glutamate. It functions in the pathway cell wall biogenesis; peptidoglycan biosynthesis. Functionally, provides the (R)-glutamate required for cell wall biosynthesis. This is Glutamate racemase from Campylobacter curvus (strain 525.92).